Here is a 1199-residue protein sequence, read N- to C-terminus: DNA-directed RNA polymerase subunit beta' (1199 aa).

Residues Cys-60, Cys-62, Cys-75, and Cys-78 each coordinate Zn(2+). Mg(2+) contacts are provided by Asp-449, Asp-451, and Asp-453. The Zn(2+) site is built by Cys-818, Cys-892, Cys-899, and Cys-902.

It belongs to the RNA polymerase beta' chain family. In terms of assembly, RNAP is composed of a core of 2 alpha, a beta and a beta' subunit. The core is associated with a delta subunit, and at least one of epsilon or omega. When a sigma factor is associated with the core the holoenzyme is formed, which can initiate transcription. Requires Mg(2+) as cofactor. It depends on Zn(2+) as a cofactor.

It catalyses the reaction RNA(n) + a ribonucleoside 5'-triphosphate = RNA(n+1) + diphosphate. In terms of biological role, DNA-dependent RNA polymerase catalyzes the transcription of DNA into RNA using the four ribonucleoside triphosphates as substrates. This is DNA-directed RNA polymerase subunit beta' from Bacillus subtilis (strain 168).